The chain runs to 388 residues: N-acetylneuraminate epimerase (388 aa).

An N-terminal signal peptide occupies residues 1–26 (MFSLIRAKRLAIGIAALAWSTGAVMA). Kelch repeat units follow at residues 48-92 (MAYV…AAAG), 94-147 (KIFA…VGLA), 149-186 (GRIA…KLVD), 187-232 (SYMG…ATMG), 236-285 (FLLV…VAGA), 307-356 (ANAA…DAPG), and 358-387 (LLVV…LSVE). Residue E242 is the Proton acceptor of the active site.

It belongs to the NanM family. As to quaternary structure, homodimer.

Its subcellular location is the periplasm. It catalyses the reaction N-acetyl-alpha-neuraminate = N-acetyl-beta-neuraminate. In terms of biological role, converts alpha-N-acetylneuranimic acid (Neu5Ac) to the beta-anomer, accelerating the equilibrium between the alpha- and beta-anomers. Probably facilitates sialidase-negative bacteria to compete successfully for limited amounts of extracellular Neu5Ac, which is likely taken up in the beta-anomer. In addition, the rapid removal of sialic acid from solution might be advantageous to the bacterium to damp down host responses. This is N-acetylneuraminate epimerase from Brucella melitensis biotype 1 (strain ATCC 23456 / CCUG 17765 / NCTC 10094 / 16M).